A 162-amino-acid chain; its full sequence is Ribosome maturation factor RimP (162 aa).

It belongs to the RimP family.

The protein localises to the cytoplasm. In terms of biological role, required for maturation of 30S ribosomal subunits. In Leptospira interrogans serogroup Icterohaemorrhagiae serovar copenhageni (strain Fiocruz L1-130), this protein is Ribosome maturation factor RimP.